Reading from the N-terminus, the 596-residue chain is uncharacterized protein (596 aa).

The Helicase ATP-binding domain occupies 44-203 (KYLASQPRDF…PFVTYALDAD (160 aa)). The 148-residue stretch at 285-432 (RLRQLRTHVP…PHRESTDNPL (148 aa)) folds into the Helicase C-terminal domain. Disordered regions lie at residues 420-444 (LGKPHRESTDNPLGGNPATMTQTEQ) and 506-533 (EQLQKRTAAQQASSTPDRTSGAPASVHG). Over residues 510–523 (KRTAAQQASSTPDR) the composition is skewed to polar residues.

To M.tuberculosis Rv2917.

This is an uncharacterized protein from Mycobacterium leprae (strain TN).